Reading from the N-terminus, the 225-residue chain is Cytidylate kinase (225 aa).

An ATP-binding site is contributed by 12–20; the sequence is GPSGAGKGT.

The protein belongs to the cytidylate kinase family. Type 1 subfamily.

The protein resides in the cytoplasm. The catalysed reaction is CMP + ATP = CDP + ADP. It catalyses the reaction dCMP + ATP = dCDP + ADP. The chain is Cytidylate kinase from Pectobacterium atrosepticum (strain SCRI 1043 / ATCC BAA-672) (Erwinia carotovora subsp. atroseptica).